The following is a 142-amino-acid chain: uncharacterized protein (142 aa).

The N-terminal stretch at 1-20 (MPSVNEFFIFFLIVWHTCEC) is a signal peptide. Asparagine 80 carries N-linked (GlcNAc...) asparagine glycosylation.

This is an uncharacterized protein from Dictyostelium discoideum (Social amoeba).